The sequence spans 61 residues: Large ribosomal subunit protein bL28 (61 aa).

Belongs to the bacterial ribosomal protein bL28 family.

This chain is Large ribosomal subunit protein bL28, found in Geobacillus sp. (strain WCH70).